The chain runs to 494 residues: MFEIKKICCIGAGYVGGPTCSVIAQMCPKIQVTVVDVNEARINAWNSDTLPIYEPGLKEVVESCRGRNLFFSTSIDDAIREADLVFISVNTPTKTYGMGKGRAADLKYIEACARRIVQNSNGYKIVTEKSTVPVRAAESIRRIFDANTKPNLDLQVLSNPEFLAEGTAIKDLKNPDRVLIGGDDSPEGQKAVRALCAVYEHWVPKEKILTTNTWSSELSKLAANAFLAQRISSINSISALCEATGADVEEVARAIGTDQRIGNKFLKASVGFGGSCFQKDVLNLVYLCEALNLPEVARYWQQVIDMNDYQRRRFASRIIDSLFNTVTDKKIAILGFAFKKDTGDTRESSSIYISKYLMDEGAKLHIYDPKVPKEQIILDLSHPGVSEDNQVSRLVTISQDPYEACDGAHALVICTEWDMFKELDYERIHKKMLKPAFIFDGRRVLDDLHNELQVIGFQIETIGKKVSAKRIPFASSCEIPKFSLQDPPVKKPRV.

NAD(+)-binding positions include 11 to 16 (GAGYVG), Asp-36, Arg-41, 89 to 93 (VNTPT), and 130 to 132 (STV). The disordered stretch occupies residues 88 to 110 (SVNTPTKTYGMGKGRAADLKYIE). The interval 129–135 (KSTVPVR) is allosteric switch region. Glu-161 serves as the catalytic Proton donor/acceptor. Residues 161–165 (EFLAE), 220–224 (KLAAN), Arg-260, and 267–273 (KASVGFG) contribute to the substrate site. Glu-165 is a binding site for NAD(+). Lys-220 serves as the catalytic Proton donor/acceptor. Residue Cys-276 is the Nucleophile of the active site. Position 276–279 (276–279 (CFQK)) interacts with NAD(+). Positions 321–325 (SLFNT) are important for formation of active hexamer structure. A substrate-binding site is contributed by 338–339 (FK). Arg-346 provides a ligand contact to NAD(+). Residue Arg-442 coordinates substrate. The disordered stretch occupies residues 466–494 (VSAKRIPFASSCEIPKFSLQDPPVKKPRV).

Belongs to the UDP-glucose/GDP-mannose dehydrogenase family. As to quaternary structure, homohexamer.

It carries out the reaction UDP-alpha-D-glucose + 2 NAD(+) + H2O = UDP-alpha-D-glucuronate + 2 NADH + 3 H(+). It participates in nucleotide-sugar biosynthesis; UDP-alpha-D-glucuronate biosynthesis; UDP-alpha-D-glucuronate from UDP-alpha-D-glucose: step 1/1. Its activity is regulated as follows. UDP-alpha-D-xylose (UDX) acts as a feedback inhibitor. It binds at the same site as the substrate, but functions as allosteric inhibitor by triggering a conformation change that disrupts the active hexameric ring structure and gives rise to an inactive, horseshoe-shaped hexamer. Catalyzes the formation of UDP-alpha-D-glucuronate, a constituent of complex glycosaminoglycans. Required for the biosynthesis of chondroitin sulfate and heparan sulfate. Required for embryonic development via its role in the biosynthesis of glycosaminoglycans. This is UDP-glucose 6-dehydrogenase (UGDH) from Gallus gallus (Chicken).